The sequence spans 204 residues: MGAYKYMQELWRKKQSDVMRFLLRVRCWQYRQLSGLHRAPRPTRPDKARRLGYKAKQGYVIYRIRVRRGGRKRPVPKGATYGKPVHHGVNQIKFARSLQSTAEERAGRHCGALRVLNSYWVGEDSTYKFFEVILIDPFHKAVRRDPDAQWITKAVHKHREMRGLTSAGKKSRGLGKGHKFHLTIGGSRRAAWRRRNTLQLHRYR.

This sequence belongs to the eukaryotic ribosomal protein eL15 family. As to quaternary structure, component of the large ribosomal subunit.

It is found in the cytoplasm. In terms of biological role, component of the large ribosomal subunit. The ribosome is a large ribonucleoprotein complex responsible for the synthesis of proteins in the cell. This is Large ribosomal subunit protein eL15 (rpl15) from Anguilla japonica (Japanese eel).